A 322-amino-acid chain; its full sequence is Major serine/threonine-protein phosphatase PP2A-2 catalytic subunit (322 aa).

4 residues coordinate Mn(2+): D70, H72, D98, and N130. H131 functions as the Proton donor in the catalytic mechanism. Mn(2+) contacts are provided by H180 and H254. L322 carries the post-translational modification Leucine methyl ester.

It belongs to the PPP phosphatase family. PP-2A subfamily. Requires Mn(2+) as cofactor.

It catalyses the reaction O-phospho-L-seryl-[protein] + H2O = L-seryl-[protein] + phosphate. The catalysed reaction is O-phospho-L-threonyl-[protein] + H2O = L-threonyl-[protein] + phosphate. In terms of biological role, essential role in cell cycle control. PP2A may be involved in controlling the entry into mitosis, possibly acting as an inhibitor. In Schizosaccharomyces pombe (strain 972 / ATCC 24843) (Fission yeast), this protein is Major serine/threonine-protein phosphatase PP2A-2 catalytic subunit (ppa2).